A 612-amino-acid polypeptide reads, in one-letter code: Protein cereblon (612 aa).

The span at 1 to 11 (MDDEETAEIED) shows a compositional bias: acidic residues. Disordered regions lie at residues 1–30 (MDDEETAEIEDVNVLVPATGGEGPVDGASA), 58–133 (MELI…NPHP), and 181–211 (QERRRSRTSEEGEASSEPPHTPPPPRSPYDV). The segment covering 69 to 81 (AADAPDAAASTGS) has biased composition (low complexity). Positions 181–190 (QERRRSRTSE) are enriched in basic and acidic residues. In terms of domain architecture, Lon N-terminal spans 250-478 (HMLIFLHQHI…IIGSTLKDES (229 aa)). The CULT domain maps to 477-586 (ESVFYCRYCN…LAGSSVRIGK (110 aa)). Cys-482, Cys-485, Cys-551, and Cys-554 together coordinate Zn(2+).

The protein belongs to the CRBN family. Likely a component of a DCX (DDB1-CUL4-X-box) protein ligase complex. May interact with pic/DDB1. Post-translationally, ubiquitinated.

It is found in the nucleus. It participates in protein modification; protein ubiquitination. Its function is as follows. Substrate recognition component of a DCX (DDB1-CUL4-X-box) E3 protein ligase complex that mediates the ubiquitination and subsequent proteasomal degradation of target proteins. Has an essential role in mediating growth by negatively regulating insulin signaling. It also has a role in maintaining presynaptic function in the neuromuscular junction synapses of third-instar larvae. This Drosophila willistoni (Fruit fly) protein is Protein cereblon.